Reading from the N-terminus, the 384-residue chain is Lipid-A-disaccharide synthase (384 aa).

The protein belongs to the LpxB family.

It carries out the reaction a lipid X + a UDP-2-N,3-O-bis[(3R)-3-hydroxyacyl]-alpha-D-glucosamine = a lipid A disaccharide + UDP + H(+). The protein operates within bacterial outer membrane biogenesis; LPS lipid A biosynthesis. Functionally, condensation of UDP-2,3-diacylglucosamine and 2,3-diacylglucosamine-1-phosphate to form lipid A disaccharide, a precursor of lipid A, a phosphorylated glycolipid that anchors the lipopolysaccharide to the outer membrane of the cell. The sequence is that of Lipid-A-disaccharide synthase from Geobacter metallireducens (strain ATCC 53774 / DSM 7210 / GS-15).